We begin with the raw amino-acid sequence, 428 residues long: Cytochrome c biogenesis protein CcsB (428 aa).

A run of 3 helical transmembrane segments spans residues 14–34 (LRFA…GTFI), 72–92 (SFWF…CSFR), and 162–182 (IGPL…AYGS).

The protein belongs to the Ccs1/CcsB family. As to quaternary structure, may interact with CcsA.

It is found in the cellular thylakoid membrane. Required during biogenesis of c-type cytochromes (cytochrome c6 and cytochrome f) at the step of heme attachment. The chain is Cytochrome c biogenesis protein CcsB from Prochlorococcus marinus (strain AS9601).